The chain runs to 275 residues: 2,3,4,5-tetrahydropyridine-2,6-dicarboxylate N-succinyltransferase (275 aa).

The substrate site is built by arginine 108 and aspartate 145.

This sequence belongs to the transferase hexapeptide repeat family. As to quaternary structure, homotrimer.

Its subcellular location is the cytoplasm. The catalysed reaction is (S)-2,3,4,5-tetrahydrodipicolinate + succinyl-CoA + H2O = (S)-2-succinylamino-6-oxoheptanedioate + CoA. It participates in amino-acid biosynthesis; L-lysine biosynthesis via DAP pathway; LL-2,6-diaminopimelate from (S)-tetrahydrodipicolinate (succinylase route): step 1/3. This Maricaulis maris (strain MCS10) (Caulobacter maris) protein is 2,3,4,5-tetrahydropyridine-2,6-dicarboxylate N-succinyltransferase.